The primary structure comprises 379 residues: MKILRKNHPLLKIINHSFIDLPTPSNISSWWNFGSLLGMCLMIQILTGLFLAMHYTSDTTTAFSSVAHICRDVNYGWLIRYLHANGASMFFICLFIHVGRGIYYGSYALSETWNIGIILFLMTMATAFVGYVLPWGQMSFWGATVITNLLSAIPYIGSTLVEWIWGGFSVDKATLTRFFAFHFILPFIIAAFALVHLLFLHETGSNNPSGLNSDSDKIPFHPYYTTKDLLGIFLLLLVLMILALFFPDVLGDPDNFTPANPLNTPAHIKPEWYFLFAYAILRSIPNKLGGVLALVLSILILAAFPLLNTSKQHGLIFRPVTQVIYWIFIANLLVLTWIGGQPVEYPFTMIGQIASITYFAIITILMPISNTIENNIIKL.

Transmembrane regions (helical) follow at residues 33 to 53 (FGSL…FLAM), 77 to 98 (WLIR…FIHV), 113 to 133 (WNIG…GYVL), and 178 to 198 (FFAF…VHLL). The heme b site is built by His-83 and His-97. Residues His-182 and His-196 each contribute to the heme b site. His-201 contacts a ubiquinone. A run of 4 helical transmembrane segments spans residues 226-246 (TKDL…ALFF), 288-308 (LGGV…PLLN), 320-340 (VTQV…WIGG), and 347-367 (FTMI…ILMP).

This sequence belongs to the cytochrome b family. The cytochrome bc1 complex contains 11 subunits: 3 respiratory subunits (MT-CYB, CYC1 and UQCRFS1), 2 core proteins (UQCRC1 and UQCRC2) and 6 low-molecular weight proteins (UQCRH/QCR6, UQCRB/QCR7, UQCRQ/QCR8, UQCR10/QCR9, UQCR11/QCR10 and a cleavage product of UQCRFS1). This cytochrome bc1 complex then forms a dimer. Requires heme b as cofactor.

Its subcellular location is the mitochondrion inner membrane. In terms of biological role, component of the ubiquinol-cytochrome c reductase complex (complex III or cytochrome b-c1 complex) that is part of the mitochondrial respiratory chain. The b-c1 complex mediates electron transfer from ubiquinol to cytochrome c. Contributes to the generation of a proton gradient across the mitochondrial membrane that is then used for ATP synthesis. This is Cytochrome b (MT-CYB) from Akodon fumeus (Smoky grass mouse).